Reading from the N-terminus, the 403-residue chain is GTPase Obg (403 aa).

An Obg domain is found at 1–159 (MKFIDESLIR…RDLLLELMLL (159 aa)). The region spanning 160 to 333 (ADVGMLGFPN…LCRDIMDFII (174 aa)) is the OBG-type G domain. Residues 166 to 173 (GFPNAGKS), 191 to 195 (FTTLV), 213 to 216 (DIPG), 283 to 286 (NKID), and 314 to 316 (SAA) each bind GTP. Residues Ser173 and Thr193 each coordinate Mg(2+). The tract at residues 364–403 (YQFDDDEDWDDDWTEEDDDEDWDDDWSEEDDEGIEFIYKP) is disordered. Residues 365–397 (QFDDDEDWDDDWTEEDDDEDWDDDWSEEDDEGI) show a composition bias toward acidic residues.

This sequence belongs to the TRAFAC class OBG-HflX-like GTPase superfamily. OBG GTPase family. Monomer. The cofactor is Mg(2+).

The protein localises to the cytoplasm. An essential GTPase which binds GTP, GDP and possibly (p)ppGpp with moderate affinity, with high nucleotide exchange rates and a fairly low GTP hydrolysis rate. Plays a role in control of the cell cycle, stress response, ribosome biogenesis and in those bacteria that undergo differentiation, in morphogenesis control. The protein is GTPase Obg of Haemophilus influenzae (strain PittGG).